Here is a 259-residue protein sequence, read N- to C-terminus: Adenosylcobinamide-GDP ribazoletransferase (259 aa).

7 helical membrane-spanning segments follow: residues 36–56, 65–85, 108–128, 133–153, 175–195, 201–221, and 238–258; these read FSPL…ILLL, MPFI…VDGL, IGAS…AALF, LILF…IWAI, GFLI…FILI, IIST…ALII, and GASV…ILPA.

It belongs to the CobS family. Mg(2+) serves as cofactor.

The protein localises to the cell inner membrane. It carries out the reaction alpha-ribazole + adenosylcob(III)inamide-GDP = adenosylcob(III)alamin + GMP + H(+). The catalysed reaction is alpha-ribazole 5'-phosphate + adenosylcob(III)inamide-GDP = adenosylcob(III)alamin 5'-phosphate + GMP + H(+). Its pathway is cofactor biosynthesis; adenosylcobalamin biosynthesis; adenosylcobalamin from cob(II)yrinate a,c-diamide: step 7/7. Joins adenosylcobinamide-GDP and alpha-ribazole to generate adenosylcobalamin (Ado-cobalamin). Also synthesizes adenosylcobalamin 5'-phosphate from adenosylcobinamide-GDP and alpha-ribazole 5'-phosphate. This chain is Adenosylcobinamide-GDP ribazoletransferase, found in Prochlorococcus marinus (strain SARG / CCMP1375 / SS120).